The chain runs to 451 residues: uncharacterized protein (451 aa).

Residues 1-18 (MRTRITLALAVLLLLLAG) form the signal peptide. A lipid anchor (N-palmitoyl cysteine) is attached at Cys19. Cys19 carries the S-diacylglycerol cysteine lipid modification. Residues 424–451 (TSADPPPGVPRAGKRNIRDATSRLPSTP) form a disordered region.

Its subcellular location is the cell membrane. In terms of biological role, may participate in oleandomycin glycosylation and secretion during antibiotic production. This is an uncharacterized protein from Streptomyces antibioticus.